A 196-amino-acid polypeptide reads, in one-letter code: Ribosome maturation factor RimP (196 aa).

Residues 164 to 196 form a disordered region; the sequence is LAPQKPNKPGPKKPGHDKKKPSNEPAAGKPRAE. A compositionally biased stretch (basic residues) spans 173–182; that stretch reads GPKKPGHDKK.

Belongs to the RimP family.

Its subcellular location is the cytoplasm. Required for maturation of 30S ribosomal subunits. In Xanthomonas campestris pv. campestris (strain 8004), this protein is Ribosome maturation factor RimP.